Here is a 979-residue protein sequence, read N- to C-terminus: UPF0182 protein BCG_0095 (979 aa).

The next 7 helical transmembrane spans lie at 19–39, 63–83, 114–134, 174–194, 211–231, 260–280, and 288–308; these read LVTAGMGMLALLLFGPRLVDI, LAIVAAVALVVAGIVLAALLL, LFGWGIAVTLGVVCGLIASFD, WLFVAVVLAFLASLLTHYLFG, VQLAVFAGAVVLLKAVAYWLD, KLVLVAIAVLCAVSFFTAIFL, and MAAALLVLSAILVGGLWPLLM. The interval 898 to 948 is disordered; that stretch reads GTGRVATAPGGDAASAPPPGAGGPAPPQAVPPPRTTQPPAAPPRGPDVPPA. Low complexity predominate over residues 902-912; that stretch reads VATAPGGDAAS. Positions 913–946 are enriched in pro residues; it reads APPPGAGGPAPPQAVPPPRTTQPPAAPPRGPDVP.

The protein belongs to the UPF0182 family.

It is found in the cell membrane. In Mycobacterium bovis (strain BCG / Pasteur 1173P2), this protein is UPF0182 protein BCG_0095.